A 37-amino-acid polypeptide reads, in one-letter code: Diuretic hormone 1 (37 aa).

Belongs to the sauvagine/corticotropin-releasing factor/urotensin I family.

The protein resides in the secreted. Stimulates fluid secretion by the Malpighian tubules. Increases cyclic AMP production. The protein is Diuretic hormone 1 of Tenebrio molitor (Yellow mealworm beetle).